Reading from the N-terminus, the 434-residue chain is Enolase A (434 aa).

Substrate-binding residues include H160 and E169. E212 functions as the Proton donor in the catalytic mechanism. Mg(2+)-binding residues include D247, E296, and D321. E296 and D321 together coordinate substrate. K346 functions as the Proton acceptor in the catalytic mechanism. Residues 373 to 376 (SHRS) and K397 contribute to the substrate site.

Belongs to the enolase family. In terms of assembly, homodimer. The cofactor is Mg(2+).

The protein resides in the cytoplasm. It carries out the reaction (2R)-2-phosphoglycerate = phosphoenolpyruvate + H2O. The protein operates within carbohydrate degradation; glycolysis; pyruvate from D-glyceraldehyde 3-phosphate: step 4/5. In Dictyostelium discoideum (Social amoeba), this protein is Enolase A (enoA).